A 264-amino-acid polypeptide reads, in one-letter code: MAKMRISPELKKLIEKYRCVKDTEGMSPAKVYKLVGENENLYLKMTDSRYKGTTYDVEREKDMMLWLEGKLPVPKVLHFERHDGWSNLLMSEADGVLCSEEYEDEQSPEKIIELYAECIRLFHSIDISDCPYTNSLDSRLAELDYLLNNDLADVDCENWEEDTPFKDPRELYDFLKTEKPEEELVFSHGDLGDSNIFVKDGKVSGFIDLGRSGRADKWYDIAFCVRSIREDIGEEQYVELFFDLLGIKPDWEKIKYYILLDELF.

Aspartate 190 functions as the Proton acceptor in the catalytic mechanism.

The protein belongs to the aminoglycoside phosphotransferase family.

The catalysed reaction is kanamycin A + ATP = kanamycin 3'-phosphate + ADP + H(+). In terms of biological role, resistance to kanamycin and structurally-related aminoglycosides, including amikacin. The protein is Aminoglycoside 3'-phosphotransferase (aphA) of Enterococcus faecalis (Streptococcus faecalis).